We begin with the raw amino-acid sequence, 86 residues long: Weak neurotoxin 5 (86 aa).

An N-terminal signal peptide occupies residues Met-1–Thr-21. 5 disulfide bridges follow: Cys-24/Cys-45, Cys-27/Cys-32, Cys-38/Cys-63, Cys-67/Cys-78, and Cys-79/Cys-84.

It belongs to the three-finger toxin family. Ancestral subfamily. Orphan group II sub-subfamily. In terms of tissue distribution, expressed by the venom gland.

The protein resides in the secreted. In terms of biological role, binds with low affinity to muscular and very low affinity to neuronal (alpha-7/CHRNA7) nicotinic acetylcholine receptor (nAChR). This Naja sputatrix (Malayan spitting cobra) protein is Weak neurotoxin 5.